The sequence spans 747 residues: MKTDIQTELTQALLSHEKVWANEEKTILAKNILLDLVEKTDPTIIGLLLGNDDLKRHFFVEVNGVLVFKLQDFRFFLDKHSINNSYTKYANRIGLTDGNRFLKDSSDIVLDFPFKDCVLNGGQSTEEGEEIYFKRNNSQSVSQSVSQSVSQSVSQSVSQSVSQSVSQSVSQSVSQSVSQLYTKLTRKRQEIFFNQTLAFDEIDRLFDAKAFSKFSRYTADGKQAVGEIKRHSDGTPAENLIIKGNNLIALHSLAKQFKGKVKLIYIDPPYNTGNDGFKYNDKFNHSTWLTFMKNRLEIAKTLLADDGVIFVQCDDIEQAYLKILMDDIFDRDNFLNIVTVKTKIGGVSGSSEGKSLKDSTEFINVFSKNRERLFLNPVYQKTEVNEFIKNYEDSGKSWKYTQVLIDLGEKILLEEKDGFKYYHYPNAQMTSIVKFSQDQNLSKEIIYTEYSHKVYRTTNAQSSIRSKIIEDLYSIKNGIVSIEYIPQKGKNAGNLIEVFYNASNKDMFMFLSDMLIKEKNKYFYLQKVNTLWDDIQYNNLNKEGGYIDFKNGKKPEALLRRIIDMTTKEGDIVLDYHLGSGTTAAVAHKMNRQYIGIEQMDYIETLAVERLKKVIDGEQGGISKAVNWQGGGEFVYAELAPFNETAKQQILACEDSDDIKTLFEDLCERYFLKYNVSVKEFSQIIEEPEFQSLPLDEQKQMVLEMLDLNQMYVSLSEMDDEQFAGCLNDDDKALSRAFYQAEKKDGE.

Residues 267–270 (DPPY) are binding of S-adenosyl methionine.

The protein belongs to the N(4)/N(6)-methyltransferase family. Homodimer, also forms a functional restriction-competent complex with Res.

It catalyses the reaction a 2'-deoxyadenosine in DNA + S-adenosyl-L-methionine = an N(6)-methyl-2'-deoxyadenosine in DNA + S-adenosyl-L-homocysteine + H(+). Functionally, a beta subtype methylase that binds the system-specific DNA recognition site 5'-CGAAT-3' and methylates A-4 (of only 1 strand). DNA restriction requires both the Res and Mod subunits. This Haemophilus influenzae (strain ATCC 51907 / DSM 11121 / KW20 / Rd) protein is Probable type III restriction-modification enzyme HindVI Mod subunit.